A 1350-amino-acid polypeptide reads, in one-letter code: Probable serine/threonine-protein kinase irlE (1350 aa).

Asn37 is a glycosylation site (N-linked (GlcNAc...) asparagine). A helical membrane pass occupies residues 149–169 (FWEILASCYGTISFIKFFNIF). The stretch at 731-802 (EAELKEKFEI…NIQQNYENQH (72 aa)) forms a coiled coil. Residues 761–771 (LKKKNKLKKQK) are compositionally biased toward basic residues. Disordered regions lie at residues 761 to 795 (LKKK…QNIQ) and 807 to 864 (RKFN…TTNS). The span at 772–795 (NQQQQQQAKQQAQQQKQQHQQNIQ) shows a compositional bias: low complexity. Residues 809–823 (FNQQTKGRPISPSSI) are compositionally biased toward polar residues. Over residues 824 to 864 (QNQNLNPTLLQNQNQTSNPTPNLESTKKATPTTTTTTTTNS) the composition is skewed to low complexity. Positions 903-1166 (KKESNILGRG…LSSVLKHPLF (264 aa)) constitute a Protein kinase domain. ATP contacts are provided by residues 909-917 (LGRGSNGTL) and Lys932. The active-site Proton acceptor is the Asp1034. In terms of domain architecture, KEN spans 1169–1346 (SLKKIKFLES…KNSIHFSNDT (178 aa)).

Belongs to the protein kinase superfamily. Ser/Thr protein kinase family.

It is found in the membrane. The enzyme catalyses L-seryl-[protein] + ATP = O-phospho-L-seryl-[protein] + ADP + H(+). It carries out the reaction L-threonyl-[protein] + ATP = O-phospho-L-threonyl-[protein] + ADP + H(+). This is Probable serine/threonine-protein kinase irlE (irlE) from Dictyostelium discoideum (Social amoeba).